A 214-amino-acid chain; its full sequence is Probable transaldolase (214 aa).

Catalysis depends on lysine 83, which acts as the Schiff-base intermediate with substrate.

It belongs to the transaldolase family. Type 3B subfamily.

The protein resides in the cytoplasm. It catalyses the reaction D-sedoheptulose 7-phosphate + D-glyceraldehyde 3-phosphate = D-erythrose 4-phosphate + beta-D-fructose 6-phosphate. Its pathway is carbohydrate degradation; pentose phosphate pathway; D-glyceraldehyde 3-phosphate and beta-D-fructose 6-phosphate from D-ribose 5-phosphate and D-xylulose 5-phosphate (non-oxidative stage): step 2/3. In terms of biological role, transaldolase is important for the balance of metabolites in the pentose-phosphate pathway. This Streptococcus equi subsp. zooepidemicus (strain MGCS10565) protein is Probable transaldolase.